Reading from the N-terminus, the 467-residue chain is tRNA dimethylallyltransferase (467 aa).

The transit peptide at 1-47 (MASVAAARAVPVGSGLRGLQRTLPLVVILGATGTGKSTLALQLGQRL) directs the protein to the mitochondrion. Residue 32–37 (TGTGKS) participates in dimethylallyl diphosphate binding. 2 interaction with substrate tRNA regions span residues 55-58 (DSMQ) and 183-187 (RKVAR). The tract at residues 221 to 230 (FSNPCILWLH) is core aggregation region. Positions 233–255 (QAVLDERLDKRVDDMLAAGLLEE) are interaction with isopentenylpyrophosphate transferase. 2 interaction with substrate tRNA regions span residues 281–283 (QSI) and 313–331 (ALKQ…WVKN). The segment at 395–425 (HLCDLCDRIIIGDREWAAHIKSKSHLNQLKK) adopts a Matrin-type zinc-finger fold. The segment at 429-467 (LDSDAVNTIESQSVSPDHNKEPKEKGSPGQNDQELKCSV) is disordered. The segment covering 433–444 (AVNTIESQSVSP) has biased composition (polar residues). S443 is modified (phosphoserine). A compositionally biased stretch (basic and acidic residues) spans 445 to 454 (DHNKEPKEKG). S455 is modified (phosphoserine).

This sequence belongs to the IPP transferase family.

It is found in the mitochondrion. The protein resides in the cytoplasm. It carries out the reaction adenosine(37) in tRNA + dimethylallyl diphosphate = N(6)-dimethylallyladenosine(37) in tRNA + diphosphate. Catalyzes the transfer of a dimethylallyl group onto the adenine at position 37 of both cytosolic and mitochondrial tRNAs, leading to the formation of N6-(dimethylallyl)adenosine (i6A37). Mediates modification of a limited subset of tRNAs: tRNA(Ser)(AGA), tRNA(Ser)(CGA), tRNA(Ser)(UGA), as well as partial modification of the selenocysteine tRNA(Ser)(UCA). TRIT1 is therefore required for selenoprotein expression. The polypeptide is tRNA dimethylallyltransferase (TRIT1) (Homo sapiens (Human)).